The following is a 477-amino-acid chain: Glycogen synthase (477 aa).

Lysine 15 serves as a coordination point for ADP-alpha-D-glucose.

The protein belongs to the glycosyltransferase 1 family. Bacterial/plant glycogen synthase subfamily.

It catalyses the reaction [(1-&gt;4)-alpha-D-glucosyl](n) + ADP-alpha-D-glucose = [(1-&gt;4)-alpha-D-glucosyl](n+1) + ADP + H(+). The protein operates within glycan biosynthesis; glycogen biosynthesis. Synthesizes alpha-1,4-glucan chains using ADP-glucose. This Escherichia coli O139:H28 (strain E24377A / ETEC) protein is Glycogen synthase.